The primary structure comprises 235 residues: MPPKKRRRQSQKAQLLFHQQPLEGPKHHYESCQQPITHTVQVPSKPIDQSTVTSWVSPQFDRAAESRFLIHWKPHRDQARRPTRRSTCKFPRLTFESPQSSSSETLLLSNRVQPQNSEKDPPRRPLVPLFSPQSCGELSVHVPHSLPHVFAPPDIQTPDSSVRDDPISPDQKENSFPSCILGPGTPSSPEPGPVLVKDTPEEKYGIKVTWRRRRHLFAYLKEKGKLDGSQFLVKI.

At Ser-50 the chain carries Phosphoserine. The short motif at 54–60 (SWVSPQF) is the RAD1-binding motif element. Disordered stretches follow at residues 75–106 (HRDQ…SETL), 111–130 (RVQP…VPLF), and 149–198 (VFAP…LVKD). Over residues 96-106 (ESPQSSSSETL) the composition is skewed to polar residues. The D-box motif lies at 123-130 (RRPLVPLF). A compositionally biased stretch (basic and acidic residues) spans 161-173 (SVRDDPISPDQKE). Positions 171 to 175 (QKENS) match the KEN box motif.

Interacts (when phosphorylated by PLK1) with POLQ; promoting POLQ recruitment to DNA damage sites. Interacts with RAD1; interaction is direct and promotes association with the 9-1-1 (RAD9-RAD1-HUS1) complex. Interacts with RAD18. Interacts with TOPBP1. Interacts with UBE2N. Phosphorylated at Ser-50 by PLK1, promoting interaction with polymerase theta (POLQ). In terms of processing, ubiquitinated and degraded by the APC/C complex upon mitotic exit.

The protein resides in the nucleus. The protein localises to the chromosome. Its function is as follows. Involved in microhomology-mediated end-joining (MMEJ) DNA repair by promoting recruitment of polymerase theta (POLQ) to DNA damage sites during mitosis. MMEJ is an alternative non-homologous end-joining (NHEJ) machinery that takes place during mitosis to repair double-strand breaks in DNA that originate in S-phase. Accumulates in M-phase; following phosphorylation by PLK1, interacts with POLQ, enabling its recruitment to double-strand breaks for subsequent repair. Also involved in the DNA damage response (DDR) signaling in response to genotoxic stresses such as ionizing radiation (IR) during the S phase. Recruited to sites of DNA damage through interaction with the 9-1-1 cell-cycle checkpoint response complex and TOPBP1 in a ATR-dependent manner. Required for the progression of the G1 to S phase transition. Plays a role in the stimulation of CHEK1 phosphorylation. The protein is RAD9, HUS1, RAD1-interacting nuclear orphan protein 1 (Rhno1) of Mus musculus (Mouse).